Here is a 917-residue protein sequence, read N- to C-terminus: Translation initiation factor IF-2 (917 aa).

Residues 241–312 (EEAKKGTLHK…GGWRSGGGRK (72 aa)) form a disordered region. The segment covering 252 to 262 (AKAEGAEDKKK) has biased composition (basic and acidic residues). Residues 274–283 (SSETSSTWQE) show a composition bias toward polar residues. Gly residues predominate over residues 298–308 (TSGGVGGWRSG). Positions 415 to 582 (PRPPVVTVMG…NVLLQAEILE (168 aa)) constitute a tr-type G domain. A G1 region spans residues 424-431 (GHVDHGKT). 424 to 431 (GHVDHGKT) provides a ligand contact to GTP. The tract at residues 449–453 (GITQH) is G2. The G3 stretch occupies residues 470–473 (DTPG). GTP is bound by residues 470-474 (DTPGH) and 524-527 (NKID). Positions 524–527 (NKID) are G4. Residues 560–562 (SAK) form a G5 region.

The protein belongs to the TRAFAC class translation factor GTPase superfamily. Classic translation factor GTPase family. IF-2 subfamily.

It is found in the cytoplasm. One of the essential components for the initiation of protein synthesis. Protects formylmethionyl-tRNA from spontaneous hydrolysis and promotes its binding to the 30S ribosomal subunits. Also involved in the hydrolysis of GTP during the formation of the 70S ribosomal complex. The protein is Translation initiation factor IF-2 of Polynucleobacter necessarius subsp. necessarius (strain STIR1).